The chain runs to 99 residues: UPF0235 protein AHA_3661 (99 aa).

Belongs to the UPF0235 family.

This chain is UPF0235 protein AHA_3661, found in Aeromonas hydrophila subsp. hydrophila (strain ATCC 7966 / DSM 30187 / BCRC 13018 / CCUG 14551 / JCM 1027 / KCTC 2358 / NCIMB 9240 / NCTC 8049).